Reading from the N-terminus, the 993-residue chain is UPF0182 protein MAP_3291c (993 aa).

7 helical membrane-spanning segments follow: residues 18-38 (ILIL…RLID), 63-83 (FVVF…GLAV), 113-133 (LVSV…AQSY), 175-195 (FVAV…FGGI), 210-230 (IQLV…YWLD), 254-274 (AVLP…AAVF), and 287-307 (IGLV…PLIV). Positions 903–941 (NIQPTEGGAPAASPPANAPAPAVTPGSAPPVAAPPVPDG) are disordered. Residues 929-939 (SAPPVAAPPVP) are compositionally biased toward pro residues.

This sequence belongs to the UPF0182 family.

It localises to the cell membrane. The polypeptide is UPF0182 protein MAP_3291c (Mycolicibacterium paratuberculosis (strain ATCC BAA-968 / K-10) (Mycobacterium paratuberculosis)).